We begin with the raw amino-acid sequence, 407 residues long: Transmembrane protein 184B (407 aa).

Low complexity predominate over residues 1 to 28 (MTVRGAALAPDPASPTTTTASPSVSATP). The segment at 1 to 31 (MTVRGAALAPDPASPTTTTASPSVSATPEGS) is disordered. The next 7 helical transmembrane spans lie at 40 to 60 (FLMTTAAQAISGFFVWTALLI), 84 to 104 (ILFIVPIYAFDSWLSLLFFTN), 121 to 141 (FVIYNFLSLCYEYLGGESAIM), 178 to 198 (LQFCVVKPLMAVSTVILQAFG), 214 to 234 (VTIIYNISVSLALYALFLFYF), 249 to 269 (FFMVKSVIFLSFWQGMLLAIL), and 290 to 310 (VAAGYQDFIICVEMFFAALAL). The segment at 369–395 (TLEPGPTWRGGTHSLSRSHSLSGARDN) is disordered. Residues S388, S402, and S403 each carry the phosphoserine modification.

The protein belongs to the TMEM184 family.

It is found in the membrane. May activate the MAP kinase signaling pathway. The chain is Transmembrane protein 184B (Tmem184b) from Mus musculus (Mouse).